The sequence spans 448 residues: Trigger factor (448 aa).

The 87-residue stretch at 167–253 (GSIVRVDFVE…LKDIKRRDIP (87 aa)) folds into the PPIase FKBP-type domain.

Belongs to the FKBP-type PPIase family. Tig subfamily.

The protein localises to the cytoplasm. The catalysed reaction is [protein]-peptidylproline (omega=180) = [protein]-peptidylproline (omega=0). Involved in protein export. Acts as a chaperone by maintaining the newly synthesized protein in an open conformation. Functions as a peptidyl-prolyl cis-trans isomerase. This chain is Trigger factor, found in Borrelia turicatae (strain 91E135).